We begin with the raw amino-acid sequence, 537 residues long: MLQLSLSRLGMGSLTASPWHLLLLGGASWILARILAWIYTFYDNCCRLRCFPQPPKPSWFWGHLTLMKNNEEGMQFIAHLGRNFRDIHLSWVGPVYPILRLVHPNVIAPLLQASAAVAPKEMTLYGFLKPWLGDGLLMSAGEKWNHHRRLLTPAFHFDILKSYVKIFNKSVNTMHAKWQRLTAKGSARLDMFEHISLMTLDSLQKCIFSFDSNCQESNSEYIAAILELSSLIVKRQRQPFLYLDFLYYLTADGRRFRKACDVVHNFTDAVIRERRSTLNTQGVDEFLKARAKTKTLDFIDVLLLAKDEHGKGLSDVDIRAEADTFMFGGHDTTASALSWILYNLARHPEYQERCRQEVRELLRDREPEEIEWDDLAQLPFLTMCIKESLRLHPPVLLISRCCSQDIVLPDGRVIPKGNICVISIFGVHHNPSVWPDPEVYNPFRFDPENPQKRSPLAFIPFSAGPRNCIGQTFAMSEIKVALALTLLRFCVLPDDKEPRRKPELILRAEGGLWLRVEPLSTVTSQLPWDLLAHPPTS.

Heme is bound at residue Cys-468.

It belongs to the cytochrome P450 family. It depends on heme as a cofactor. As to expression, high expression in liver and kidney. Lower expression in brain.

The protein resides in the endoplasmic reticulum membrane. It is found in the microsome membrane. The catalysed reaction is an organic molecule + reduced [NADPH--hemoprotein reductase] + O2 = an alcohol + oxidized [NADPH--hemoprotein reductase] + H2O + H(+). This is Cytochrome P450 4F6 (Cyp4f6) from Rattus norvegicus (Rat).